The primary structure comprises 353 residues: UPF0283 membrane protein YcjF (353 aa).

Basic and acidic residues predominate over residues 1–19 (MSEPLKPRIDFAEPLKEEP). The interval 1 to 35 (MSEPLKPRIDFAEPLKEEPTSAFKAQQTFSEAESR) is disordered. 3 helical membrane-spanning segments follow: residues 70-90 (MVMG…VQWT), 100-120 (VALG…GSVV), and 213-233 (ESTL…FIAW).

The protein belongs to the UPF0283 family.

Its subcellular location is the cell inner membrane. This is UPF0283 membrane protein YcjF from Salmonella paratyphi A (strain AKU_12601).